The sequence spans 962 residues: Glycine dehydrogenase (decarboxylating) (962 aa).

An N6-(pyridoxal phosphate)lysine modification is found at Lys709.

This sequence belongs to the GcvP family. In terms of assembly, the glycine cleavage system is composed of four proteins: P, T, L and H. Pyridoxal 5'-phosphate is required as a cofactor.

The enzyme catalyses N(6)-[(R)-lipoyl]-L-lysyl-[glycine-cleavage complex H protein] + glycine + H(+) = N(6)-[(R)-S(8)-aminomethyldihydrolipoyl]-L-lysyl-[glycine-cleavage complex H protein] + CO2. Functionally, the glycine cleavage system catalyzes the degradation of glycine. The P protein binds the alpha-amino group of glycine through its pyridoxal phosphate cofactor; CO(2) is released and the remaining methylamine moiety is then transferred to the lipoamide cofactor of the H protein. In Shewanella sp. (strain MR-4), this protein is Glycine dehydrogenase (decarboxylating).